Here is a 209-residue protein sequence, read N- to C-terminus: NAD(P)H-quinone oxidoreductase subunit K 2 (209 aa).

Residues Cys53, Cys54, Cys118, and Cys149 each contribute to the [4Fe-4S] cluster site.

It belongs to the complex I 20 kDa subunit family. In terms of assembly, NDH-1 can be composed of about 15 different subunits; different subcomplexes with different compositions have been identified which probably have different functions. [4Fe-4S] cluster is required as a cofactor.

The protein localises to the cellular thylakoid membrane. It catalyses the reaction a plastoquinone + NADH + (n+1) H(+)(in) = a plastoquinol + NAD(+) + n H(+)(out). It carries out the reaction a plastoquinone + NADPH + (n+1) H(+)(in) = a plastoquinol + NADP(+) + n H(+)(out). Functionally, NDH-1 shuttles electrons from an unknown electron donor, via FMN and iron-sulfur (Fe-S) centers, to quinones in the respiratory and/or the photosynthetic chain. The immediate electron acceptor for the enzyme in this species is believed to be plastoquinone. Couples the redox reaction to proton translocation, and thus conserves the redox energy in a proton gradient. Cyanobacterial NDH-1 also plays a role in inorganic carbon-concentration. This Acaryochloris marina (strain MBIC 11017) protein is NAD(P)H-quinone oxidoreductase subunit K 2.